The sequence spans 261 residues: uncharacterized protein (261 aa).

The region spanning 1 to 236 is the ABC transporter domain; it reads MEIKEITIIG…SRKINEVDNW (236 aa). Position 36-43 (36-43) interacts with ATP; it reads GPTGSGKS.

It belongs to the ABC transporter superfamily.

This is an uncharacterized protein from Methanocaldococcus jannaschii (strain ATCC 43067 / DSM 2661 / JAL-1 / JCM 10045 / NBRC 100440) (Methanococcus jannaschii).